The sequence spans 449 residues: Methionine aminopeptidase 2-2 (449 aa).

Residues 1–91 (MAAQAAPELA…PRIPLTTLFP (91 aa)) form a disordered region. The span at 15–28 (NKNTGSAEASTVPA) shows a compositional bias: polar residues. Positions 34–50 (DDAENEGDSDDDRDDEQ) are enriched in acidic residues. Basic residues predominate over residues 61–75 (KKKKKKRPKKKKKTA). Residue H199 coordinates substrate. Residues D219, D230, and H299 each contribute to the a divalent metal cation site. H307 serves as a coordination point for substrate. A divalent metal cation is bound by residues E335 and E430.

It belongs to the peptidase M24A family. Methionine aminopeptidase eukaryotic type 2 subfamily. Co(2+) is required as a cofactor. The cofactor is Zn(2+). Requires Mn(2+) as cofactor. Fe(2+) serves as cofactor.

It is found in the cytoplasm. The enzyme catalyses Release of N-terminal amino acids, preferentially methionine, from peptides and arylamides.. Its function is as follows. Cotranslationally removes the N-terminal methionine from nascent proteins. The N-terminal methionine is often cleaved when the second residue in the primary sequence is small and uncharged (Met-Ala-, Cys, Gly, Pro, Ser, Thr, or Val). This chain is Methionine aminopeptidase 2-2, found in Arthroderma gypseum (strain ATCC MYA-4604 / CBS 118893) (Microsporum gypseum).